The primary structure comprises 715 residues: 1,4-alpha-glucan branching enzyme GlgB (715 aa).

Aspartate 396 functions as the Nucleophile in the catalytic mechanism. Glutamate 449 (proton donor) is an active-site residue.

The protein belongs to the glycosyl hydrolase 13 family. GlgB subfamily. Monomer.

The enzyme catalyses Transfers a segment of a (1-&gt;4)-alpha-D-glucan chain to a primary hydroxy group in a similar glucan chain.. The protein operates within glycan biosynthesis; glycogen biosynthesis. Its function is as follows. Catalyzes the formation of the alpha-1,6-glucosidic linkages in glycogen by scission of a 1,4-alpha-linked oligosaccharide from growing alpha-1,4-glucan chains and the subsequent attachment of the oligosaccharide to the alpha-1,6 position. The sequence is that of 1,4-alpha-glucan branching enzyme GlgB from Vibrio vulnificus (strain YJ016).